An 886-amino-acid polypeptide reads, in one-letter code: Cytosolic carboxypeptidase-like protein 5 (886 aa).

Residues 157-570 form the Peptidase M14 domain; sequence YPFSYSDCQD…AMAIAALDMA (414 aa). Zn(2+) is bound by residues histidine 252 and glutamate 255. Positions 344 to 353 are enriched in polar residues; it reads AKSPTNQQPT. Disordered regions lie at residues 344–363 and 374–401; these read AKSPTNQQPTLHLPPEAPLS and EAHLGQSPDGENPATWPETEPAEEKTDP. Histidine 434 provides a ligand contact to Zn(2+). Catalysis depends on glutamate 516, which acts as the Proton donor/acceptor. Disordered regions lie at residues 602-737 and 783-846; these read GLTS…RNMG and TRLQ…PAFS. The segment covering 621-635 has biased composition (polar residues); sequence PKSNNSLPVSCSENA. The span at 643–654 shows a compositional bias: low complexity; it reads STGTSTGGSSSS. The segment covering 655–666 has biased composition (polar residues); it reads QQNSPQMKNSPS. The span at 714 to 737 shows a compositional bias: low complexity; it reads STTSSLAPSPTLASSGPTSSRNMG. Residues 805–815 show a composition bias toward polar residues; sequence SSPTSPIPQTR. Serine 841 carries the post-translational modification Phosphoserine.

Belongs to the peptidase M14 family. Zn(2+) is required as a cofactor. As to expression, widely expressed. Highly expressed in testis, and moderately in pituitary, brain, eye and kidney.

Its subcellular location is the cytoplasm. It localises to the cytosol. The protein resides in the nucleus. It is found in the cytoskeleton. The protein localises to the spindle. Its subcellular location is the midbody. It carries out the reaction gamma-L-glutamyl-L-glutamyl-[protein] + H2O = L-glutamyl-[protein] + L-glutamate. It catalyses the reaction (L-glutamyl)(n+1)-gamma-L-glutamyl-L-glutamyl-[protein] + H2O = (L-glutamyl)(n)-gamma-L-glutamyl-L-glutamyl-[protein] + L-glutamate. The enzyme catalyses C-terminal L-alpha-aminoacyl-L-glutamyl-[tubulin] + H2O = C-terminal L-alpha-aminoacyl-[tubulin] + L-glutamate. The catalysed reaction is C-terminal L-alpha-aminoacyl-L-glutamyl-L-glutamyl-[tubulin] + H2O = C-terminal L-alpha-aminoacyl-L-glutamyl-[tubulin] + L-glutamate. Its function is as follows. Metallocarboxypeptidase that mediates deglutamylation of tubulin and non-tubulin target proteins. Catalyzes the removal of polyglutamate side chains present on the gamma-carboxyl group of glutamate residues within the C-terminal tail of alpha- and beta-tubulin. Cleaves alpha- and gamma-linked polyglutamate tubulin side-chain, as well as the branching point glutamate. Also catalyzes the removal of alpha-linked glutamate residues from the carboxy-terminus of alpha-tubulin. Mediates deglutamylation of nucleotidyltransferase CGAS, leading to CGAS antiviral defense response activation. This chain is Cytosolic carboxypeptidase-like protein 5, found in Mus musculus (Mouse).